Here is a 942-residue protein sequence, read N- to C-terminus: Isoleucine--tRNA ligase (942 aa).

The short motif at 58–68 (PYANGDIHLGH) is the 'HIGH' region element. Glu567 is an L-isoleucyl-5'-AMP binding site. The 'KMSKS' region motif lies at 608 to 612 (KMSKS). An ATP-binding site is contributed by Lys611. Zn(2+) is bound by residues Cys905, Cys908, Cys925, and Cys928.

Belongs to the class-I aminoacyl-tRNA synthetase family. IleS type 1 subfamily. In terms of assembly, monomer. Zn(2+) serves as cofactor.

The protein localises to the cytoplasm. It catalyses the reaction tRNA(Ile) + L-isoleucine + ATP = L-isoleucyl-tRNA(Ile) + AMP + diphosphate. Functionally, catalyzes the attachment of isoleucine to tRNA(Ile). As IleRS can inadvertently accommodate and process structurally similar amino acids such as valine, to avoid such errors it has two additional distinct tRNA(Ile)-dependent editing activities. One activity is designated as 'pretransfer' editing and involves the hydrolysis of activated Val-AMP. The other activity is designated 'posttransfer' editing and involves deacylation of mischarged Val-tRNA(Ile). In Pseudoalteromonas translucida (strain TAC 125), this protein is Isoleucine--tRNA ligase.